The sequence spans 684 residues: DNA ligase (684 aa).

Residues D34–D38, S83–L84, and E117 each bind NAD(+). K119 (N6-AMP-lysine intermediate) is an active-site residue. R140, E186, K300, and K324 together coordinate NAD(+). Zn(2+)-binding residues include C418, C421, C436, and C442. In terms of domain architecture, BRCT spans P601 to E684.

This sequence belongs to the NAD-dependent DNA ligase family. LigA subfamily. Mg(2+) serves as cofactor. Requires Mn(2+) as cofactor.

The catalysed reaction is NAD(+) + (deoxyribonucleotide)n-3'-hydroxyl + 5'-phospho-(deoxyribonucleotide)m = (deoxyribonucleotide)n+m + AMP + beta-nicotinamide D-nucleotide.. Its function is as follows. DNA ligase that catalyzes the formation of phosphodiester linkages between 5'-phosphoryl and 3'-hydroxyl groups in double-stranded DNA using NAD as a coenzyme and as the energy source for the reaction. It is essential for DNA replication and repair of damaged DNA. The chain is DNA ligase from Chlorobium phaeobacteroides (strain BS1).